Reading from the N-terminus, the 391-residue chain is Elongation factor Tu (391 aa).

The tr-type G domain maps to 10-201; it reads KPHVNIGTIG…AVDAYIPTPE (192 aa). The G1 stretch occupies residues 19-26; sequence GHVDHGKT. 19-26 lines the GTP pocket; the sequence is GHVDHGKT. Thr26 is a Mg(2+) binding site. The interval 55–59 is G2; the sequence is GITIS. The tract at residues 76-79 is G3; it reads DCPG. GTP-binding positions include 76 to 80 and 131 to 134; these read DCPGH and NKVD. Residues 131 to 134 form a G4 region; that stretch reads NKVD. The tract at residues 169–171 is G5; that stretch reads SAL.

Belongs to the TRAFAC class translation factor GTPase superfamily. Classic translation factor GTPase family. EF-Tu/EF-1A subfamily. Monomer.

It is found in the cytoplasm. It catalyses the reaction GTP + H2O = GDP + phosphate + H(+). GTP hydrolase that promotes the GTP-dependent binding of aminoacyl-tRNA to the A-site of ribosomes during protein biosynthesis. In Rhizobium johnstonii (strain DSM 114642 / LMG 32736 / 3841) (Rhizobium leguminosarum bv. viciae), this protein is Elongation factor Tu.